A 402-amino-acid polypeptide reads, in one-letter code: Major outer membrane porin (402 aa).

Positions 1–22 (MKKLLKSALLFAATGSALSLQA) are cleaved as a signal peptide.

This sequence belongs to the chlamydial porin (CP) (TC 1.B.2) family. Part of a disulfide cross-linked outer membrane complex (COMC) composed of the major outer membrane porin, the small cysteine-rich protein (OmcA) and the large cysteine-rich periplasmic protein (OmcB).

Its subcellular location is the cell outer membrane. Its function is as follows. In elementary bodies (EBs, the infectious stage, which is able to survive outside the host cell) provides the structural integrity of the outer envelope through disulfide cross-links with the small cysteine-rich protein and the large cysteine-rich periplasmic protein. It has been described in publications as the Sarkosyl-insoluble COMC (Chlamydia outer membrane complex), and serves as the functional equivalent of peptidoglycan. Functionally, permits diffusion of specific solutes through the outer membrane. This Chlamydia psittaci (Chlamydophila psittaci) protein is Major outer membrane porin (ompA).